The primary structure comprises 532 residues: Invertase 2 (532 aa).

A signal peptide spans 1 to 19; sequence MLLQAFLFLLAGFAAKISA. An N-linked (GlcNAc...) asparagine glycan is attached at N23. Substrate contacts are provided by residues 39 to 42 and Q60; that span reads WMND. The active site involves D42. N64 carries an N-linked (GlcNAc...) asparagine; partial glycan. Residue N97 is glycosylated (N-linked (GlcNAc...) asparagine). Residue 102 to 103 participates in substrate binding; that stretch reads FS. N-linked (GlcNAc...) asparagine glycosylation is found at N111 and N118. An N-linked (GlcNAc...) asparagine; partial glycan is attached at N165. Substrate-binding positions include 170–171 and E223; that span reads RD. N-linked (GlcNAc...) asparagine; partial glycans are attached at residues N266 and N275. W311 lines the substrate pocket. 4 N-linked (GlcNAc...) asparagine glycosylation sites follow: N356, N369, N384, and N398. An N-linked (GlcNAc...) asparagine; partial glycan is attached at N512.

This sequence belongs to the glycosyl hydrolase 32 family. Isoform Secreted is glycosylated. Isoform Intracellular is not glycosylated.

Its subcellular location is the cytoplasm. The protein localises to the secreted. The enzyme catalyses Hydrolysis of terminal non-reducing beta-D-fructofuranoside residues in beta-D-fructofuranosides.. This is Invertase 2 (SUC2) from Saccharomyces cerevisiae (strain ATCC 204508 / S288c) (Baker's yeast).